A 642-amino-acid polypeptide reads, in one-letter code: Transmembrane 9 superfamily member 4 (642 aa).

An N-terminal signal peptide occupies residues 1–23 (MATAMDWLPWSLLLFSLMCETSA). The Extracellular segment spans residues 24-281 (FYVPGVAPIN…TMSDVQIHWF (258 aa)). The helical transmembrane segment at 282–302 (SIINSVVVVFFLSGILSMIII) threads the bilayer. At 303–346 (RTLRKDIANYNKEDDIEDTMEESGWKLVHGDVFRPPQYPMILSS) the chain is on the cytoplasmic side. Tyrosine 312 is modified (phosphotyrosine). A helical membrane pass occupies residues 347-367 (LLGSGIQLFCMILIVIFVAML). At 368–376 (GMLSPSSRG) the chain is on the extracellular side. Residues 377–397 (ALMTTACFLFMFMGVFGGFSA) form a helical membrane-spanning segment. Residues 398-416 (GRLYRTLKGHRWKKGAFCT) lie on the Cytoplasmic side of the membrane. Residues 417–437 (ATLYPGVVFGICFVLNCFIWG) form a helical membrane-spanning segment. At 438–449 (KHSSGAVPFPTM) the chain is on the extracellular side. A helical membrane pass occupies residues 450-470 (VALLCMWFGISLPLVYLGYYF). Over 471-501 (GFRKQPYDNPVRTNQIPRQIPEQRWYMNRFV) the chain is Cytoplasmic. A helical membrane pass occupies residues 502–522 (GILMAGILPFGAMFIELFFIF). Residues 523 to 535 (SAIWENQFYYLFG) are Extracellular-facing. Residues 536–556 (FLFLVFIILVVSCSQISIVMV) form a helical membrane-spanning segment. Residues 557-570 (YFQLCAEDYRWWWR) lie on the Cytoplasmic side of the membrane. Residues 571–591 (NFLVSGGSAFYVLVYAIFYFV) form a helical membrane-spanning segment. Over 592–598 (NKLDIVE) the chain is Extracellular. The helical transmembrane segment at 599-619 (FIPSLLYFGYTALMVLSFWLL) threads the bilayer. The Cytoplasmic portion of the chain corresponds to 620 to 642 (TGTIGFYAAYMFVRKIYAAVKID).

The protein belongs to the nonaspanin (TM9SF) (TC 9.A.2) family. As to quaternary structure, interacts with ATP6V1H in colon cancer cells. In terms of tissue distribution, highly expressed in metastatic melanoma cells whereas it is undetectable in primary melanoma cells, healthy skin tissues and peripheral blood lymphocytes. Expressed in CD34(+) hematopoietic progenitor cells and during monocyte and granulocyte differentiation. Overexpressed in acute myeloid leukemia, in particular in those displaying granulocytic differentiation (at protein level).

It localises to the membrane. The protein localises to the golgi apparatus. Its subcellular location is the early endosome. Associates with proteins harboring glycine-rich transmembrane domains and ensures their efficient localization to the cell surface. Regulates the assembly and activity of V-ATPase in colon cancer cells via its interaction with V-type proton ATPase subunit H (ATP6V1H) and contributes to V-ATPase-mediated pH alterations in cancer cells which play an important role in drug resistance and invasiveness of colon cancer cells. Plays an important role in an atypical phagocytic activity of metastatic melanoma cells called cannibalism and is involved in the pH regulation of the intracellular vesicles in tumor cells. This chain is Transmembrane 9 superfamily member 4 (TM9SF4), found in Homo sapiens (Human).